The primary structure comprises 120 residues: Flagellar protein FliT (120 aa).

The interval 1-50 (MTNFIPSLTDWHALHALSITMLDLAHSGKWDELIEQEMNYVQLVEGIARN) is required for homodimerization. Residues 59–97 (LINQAKEILNAVLRNEAELKTLLQHRMEELRQLIDQTGK) are fliD binding.

The protein belongs to the FliT family. In terms of assembly, homodimer. Interacts with FliD and FlhC.

It localises to the cytoplasm. The protein localises to the cytosol. Its function is as follows. Dual-function protein that regulates the transcription of class 2 flagellar operons and that also acts as an export chaperone for the filament-capping protein FliD. As a transcriptional regulator, acts as an anti-FlhDC factor; it directly binds FlhC, thus inhibiting the binding of the FlhC/FlhD complex to class 2 promoters, resulting in decreased expression of class 2 flagellar operons. As a chaperone, effects FliD transition to the membrane by preventing its premature polymerization, and by directing it to the export apparatus. In Citrobacter koseri (strain ATCC BAA-895 / CDC 4225-83 / SGSC4696), this protein is Flagellar protein FliT.